The chain runs to 467 residues: Tripartite motif-containing protein 75 (467 aa).

The RING-type zinc finger occupies 16 to 57 (CPICLDDLTDPVTVECGHNFCRSCIKDFWAGQQATSSCPVCR). The B box-type zinc-finger motif lies at 90-131 (ESSTSCERHNQALTLFCEDDLQLLCDQCVEPESHGRHQVLSI). Zn(2+) contacts are provided by cysteine 95, histidine 98, cysteine 117, and histidine 123. The stretch at 168-222 (VTLREQAEAQRSQLTSECEKLMRFLDQEERAAFSRLEDEEMRLEKRLLDNIAALE) forms a coiled coil. The region spanning 276 to 466 (YSFPLQYSAL…LRLCSATDSE (191 aa)) is the B30.2/SPRY domain.

The protein belongs to the TRIM/RBCC family.

Its subcellular location is the cytoplasm. It localises to the cytoskeleton. The protein resides in the spindle. In terms of biological role, may play a role in female meiosis. The chain is Tripartite motif-containing protein 75 from Mus musculus (Mouse).